The primary structure comprises 431 residues: Glutamate-1-semialdehyde 2,1-aminomutase 2 (431 aa).

Lys-268 is modified (N6-(pyridoxal phosphate)lysine).

It belongs to the class-III pyridoxal-phosphate-dependent aminotransferase family. HemL subfamily. In terms of assembly, homodimer. The cofactor is pyridoxal 5'-phosphate.

The protein resides in the cytoplasm. The catalysed reaction is (S)-4-amino-5-oxopentanoate = 5-aminolevulinate. It participates in porphyrin-containing compound metabolism; protoporphyrin-IX biosynthesis; 5-aminolevulinate from L-glutamyl-tRNA(Glu): step 2/2. The polypeptide is Glutamate-1-semialdehyde 2,1-aminomutase 2 (Anoxybacillus flavithermus (strain DSM 21510 / WK1)).